Consider the following 790-residue polypeptide: Protein SEY1 (790 aa).

Over 1-692 (MELSEGELSH…KRSIVQHITQ (692 aa)) the chain is Cytoplasmic. One can recognise a GB1/RHD3-type G domain in the interval 55–284 (GNNYHIISVF…VNNELFKPEY (230 aa)). A GTP-binding site is contributed by 65–72 (GSQSTGKS). The chain crosses the membrane as a helical span at residues 693 to 713 (IPYYIYLIILVLGWNEFMAII). The Lumenal segment spans residues 714–716 (RNP). Residues 717-737 (LFFSLSIVLGATVYVLYYLNL) form a helical membrane-spanning segment. Over 738 to 790 (LKPAMLVAQRTMDEVIIMAKTKLREVLIDDHEVTGRQLNKIAGGKENIELDDM) the chain is Cytoplasmic.

Belongs to the TRAFAC class dynamin-like GTPase superfamily. GB1/RHD3 GTPase family. RHD3 subfamily.

It localises to the endoplasmic reticulum membrane. Its function is as follows. Cooperates with the reticulon proteins and tubule-shaping DP1 family proteins to generate and maintain the structure of the tubular endoplasmic reticulum network. Has GTPase activity, which is required for its function in ER organization. This is Protein SEY1 from Candida dubliniensis (strain CD36 / ATCC MYA-646 / CBS 7987 / NCPF 3949 / NRRL Y-17841) (Yeast).